The primary structure comprises 226 residues: 3-dehydroquinate dehydratase (226 aa).

3-dehydroquinate contacts are provided by residues Ser21, 42–44, and Arg70; that span reads EVR. Catalysis depends on His124, which acts as the Proton donor/acceptor. Lys149 functions as the Schiff-base intermediate with substrate in the catalytic mechanism. 3-dehydroquinate contacts are provided by Arg187, Thr206, and Gln210.

The protein belongs to the type-I 3-dehydroquinase family. In terms of assembly, homodimer.

The catalysed reaction is 3-dehydroquinate = 3-dehydroshikimate + H2O. It functions in the pathway metabolic intermediate biosynthesis; chorismate biosynthesis; chorismate from D-erythrose 4-phosphate and phosphoenolpyruvate: step 3/7. Functionally, involved in the third step of the chorismate pathway, which leads to the biosynthesis of aromatic amino acids. Catalyzes the cis-dehydration of 3-dehydroquinate (DHQ) and introduces the first double bond of the aromatic ring to yield 3-dehydroshikimate. This is 3-dehydroquinate dehydratase from Methanothrix thermoacetophila (strain DSM 6194 / JCM 14653 / NBRC 101360 / PT) (Methanosaeta thermophila).